A 257-amino-acid polypeptide reads, in one-letter code: Ribonuclease HII (257 aa).

The 186-residue stretch at 72–257 (TYIAGIDEVG…FAPIKDMIQK (186 aa)) folds into the RNase H type-2 domain. A divalent metal cation contacts are provided by Asp-78, Glu-79, and Asp-170.

Belongs to the RNase HII family. Requires Mn(2+) as cofactor. Mg(2+) serves as cofactor.

It is found in the cytoplasm. The catalysed reaction is Endonucleolytic cleavage to 5'-phosphomonoester.. Endonuclease that specifically degrades the RNA of RNA-DNA hybrids. This Bacillus mycoides (strain KBAB4) (Bacillus weihenstephanensis) protein is Ribonuclease HII.